A 63-amino-acid chain; its full sequence is uncharacterized protein (63 aa).

This is an uncharacterized protein from Vaccinia virus (strain Western Reserve) (VACV).